The sequence spans 131 residues: Profilin-3 (131 aa).

The protein belongs to the profilin family. Occurs in many kinds of cells as a complex with monomeric actin in a 1:1 ratio.

The protein localises to the cytoplasm. It is found in the cytoskeleton. In terms of biological role, binds to actin and affects the structure of the cytoskeleton. At high concentrations, profilin prevents the polymerization of actin, whereas it enhances it at low concentrations. By binding to PIP2, it inhibits the formation of IP3 and DG. The chain is Profilin-3 from Lilium longiflorum (Trumpet lily).